A 521-amino-acid polypeptide reads, in one-letter code: Biotinidase (521 aa).

The signal sequence occupies residues Met-1–Ser-25. The 280-residue stretch at Asn-50–Thr-329 folds into the CN hydrolase domain. The active-site Proton acceptor is Glu-90. 2 N-linked (GlcNAc...) asparagine glycosylation sites follow: Asn-128 and Asn-181. The active-site Proton donor is the Lys-190. The active-site Nucleophile is the Cys-223. N-linked (GlcNAc...) asparagine glycosylation is present at Asn-380.

The protein belongs to the carbon-nitrogen hydrolase superfamily. BTD/VNN family.

The protein resides in the secreted. The protein localises to the extracellular space. It carries out the reaction biocytin + H2O = biotin + L-lysine. It catalyses the reaction biotin amide + H2O = biotin + NH4(+). Its function is as follows. Catalytic release of biotin from biocytin, the product of biotin-dependent carboxylases degradation. The sequence is that of Biotinidase from Rattus norvegicus (Rat).